The chain runs to 150 residues: Cyclin-dependent kinases regulatory subunit (150 aa).

The span at 115-137 shows a compositional bias: low complexity; that stretch reads AAAQQQQQQQQQQQQQQQQHQTQ. The disordered stretch occupies residues 115-150; it reads AAAQQQQQQQQQQQQQQQQHQTQSISNDMQVPPQIS.

It belongs to the CKS family. In terms of assembly, forms a stable but non-covalent complex with the CDC28 protein and with a cyclin.

Its function is as follows. Binds to the catalytic subunit of the cyclin dependent kinase (CDC28) and is essential for its biological function. This Saccharomyces cerevisiae (strain ATCC 204508 / S288c) (Baker's yeast) protein is Cyclin-dependent kinases regulatory subunit.